Reading from the N-terminus, the 187-residue chain is Elongation factor P (187 aa).

Belongs to the elongation factor P family.

Its subcellular location is the cytoplasm. Its pathway is protein biosynthesis; polypeptide chain elongation. Functionally, involved in peptide bond synthesis. Stimulates efficient translation and peptide-bond synthesis on native or reconstituted 70S ribosomes in vitro. Probably functions indirectly by altering the affinity of the ribosome for aminoacyl-tRNA, thus increasing their reactivity as acceptors for peptidyl transferase. In Roseiflexus castenholzii (strain DSM 13941 / HLO8), this protein is Elongation factor P.